A 93-amino-acid chain; its full sequence is RNA-binding protein Hfq (93 aa).

The Sm domain maps to 9–68 (DPFLNALRKERIPVSIFLVNGIKLQGQIESFDQYVVLLKNAVSQMVYKHAISTVVPARNP). A compositionally biased stretch (low complexity) spans 74–86 (PAMAAGATAAPAA). Positions 74–93 (PAMAAGATAAPAADEGYGNQ) are disordered.

The protein belongs to the Hfq family. In terms of assembly, homohexamer.

In terms of biological role, RNA chaperone that binds small regulatory RNA (sRNAs) and mRNAs to facilitate mRNA translational regulation in response to envelope stress, environmental stress and changes in metabolite concentrations. Also binds with high specificity to tRNAs. The chain is RNA-binding protein Hfq from Alcanivorax borkumensis (strain ATCC 700651 / DSM 11573 / NCIMB 13689 / SK2).